The chain runs to 343 residues: Heat-inducible transcription repressor HrcA (343 aa).

It belongs to the HrcA family.

In terms of biological role, negative regulator of class I heat shock genes (grpE-dnaK-dnaJ and groELS operons). Prevents heat-shock induction of these operons. The chain is Heat-inducible transcription repressor HrcA from Natranaerobius thermophilus (strain ATCC BAA-1301 / DSM 18059 / JW/NM-WN-LF).